A 439-amino-acid polypeptide reads, in one-letter code: Histidinol dehydrogenase (439 aa).

NAD(+) contacts are provided by Tyr-127, Gln-185, and Asn-208. 3 residues coordinate substrate: Ser-234, Gln-256, and His-259. Positions 256 and 259 each coordinate Zn(2+). Catalysis depends on proton acceptor residues Glu-323 and His-324. 4 residues coordinate substrate: His-324, Asp-357, Glu-411, and His-416. Zn(2+) is bound at residue Asp-357. Residue His-416 participates in Zn(2+) binding.

Belongs to the histidinol dehydrogenase family. Zn(2+) serves as cofactor.

It catalyses the reaction L-histidinol + 2 NAD(+) + H2O = L-histidine + 2 NADH + 3 H(+). Its pathway is amino-acid biosynthesis; L-histidine biosynthesis; L-histidine from 5-phospho-alpha-D-ribose 1-diphosphate: step 9/9. In terms of biological role, catalyzes the sequential NAD-dependent oxidations of L-histidinol to L-histidinaldehyde and then to L-histidine. The sequence is that of Histidinol dehydrogenase from Aliivibrio fischeri (strain ATCC 700601 / ES114) (Vibrio fischeri).